The sequence spans 356 residues: Histidinol-phosphate aminotransferase (356 aa).

Lys-214 bears the N6-(pyridoxal phosphate)lysine mark.

This sequence belongs to the class-II pyridoxal-phosphate-dependent aminotransferase family. Histidinol-phosphate aminotransferase subfamily. As to quaternary structure, homodimer. The cofactor is pyridoxal 5'-phosphate.

It carries out the reaction L-histidinol phosphate + 2-oxoglutarate = 3-(imidazol-4-yl)-2-oxopropyl phosphate + L-glutamate. It functions in the pathway amino-acid biosynthesis; L-histidine biosynthesis; L-histidine from 5-phospho-alpha-D-ribose 1-diphosphate: step 7/9. The sequence is that of Histidinol-phosphate aminotransferase from Escherichia coli O8 (strain IAI1).